The primary structure comprises 76 residues: Large ribosomal subunit protein bL31 (76 aa).

Positions 16, 18, 36, and 39 each coordinate Zn(2+).

The protein belongs to the bacterial ribosomal protein bL31 family. Type A subfamily. Part of the 50S ribosomal subunit. Requires Zn(2+) as cofactor.

Its function is as follows. Binds the 23S rRNA. The sequence is that of Large ribosomal subunit protein bL31 from Syntrophobacter fumaroxidans (strain DSM 10017 / MPOB).